The sequence spans 464 residues: Chaperone SurA (464 aa).

Residues 1 to 25 (MTRYFSIVLSLLLAVSCVFLPVASA) form the signal peptide. 2 PpiC domains span residues 175–277 (GAQY…KLVE) and 292–391 (ATEY…QRLG). The tract at residues 439–464 (PADDHQTPSAAVIPATGAVLPSATKH) is disordered.

The protein resides in the periplasm. It catalyses the reaction [protein]-peptidylproline (omega=180) = [protein]-peptidylproline (omega=0). Chaperone involved in the correct folding and assembly of outer membrane proteins. Recognizes specific patterns of aromatic residues and the orientation of their side chains, which are found more frequently in integral outer membrane proteins. May act in both early periplasmic and late outer membrane-associated steps of protein maturation. The protein is Chaperone SurA of Xylella fastidiosa (strain 9a5c).